The primary structure comprises 302 residues: Recombination-associated protein RdgC (302 aa).

The protein belongs to the RdgC family.

The protein localises to the cytoplasm. The protein resides in the nucleoid. May be involved in recombination. The sequence is that of Recombination-associated protein RdgC from Halorhodospira halophila (strain DSM 244 / SL1) (Ectothiorhodospira halophila (strain DSM 244 / SL1)).